The primary structure comprises 284 residues: ATP synthase subunit a (284 aa).

Helical transmembrane passes span 55-75, 116-136, 165-185, 196-216, 234-254, and 255-275; these read AIHV…LGLF, IAPL…LKLI, FGMS…VKGV, PFNH…ALII, VVFI…NVPW, and AIFH…LTVV.

The protein belongs to the ATPase A chain family. In terms of assembly, F-type ATPases have 2 components, CF(1) - the catalytic core - and CF(0) - the membrane proton channel. CF(1) has five subunits: alpha(3), beta(3), gamma(1), delta(1), epsilon(1). CF(0) has three main subunits: a(1), b(2) and c(9-12). The alpha and beta chains form an alternating ring which encloses part of the gamma chain. CF(1) is attached to CF(0) by a central stalk formed by the gamma and epsilon chains, while a peripheral stalk is formed by the delta and b chains.

The protein resides in the cell inner membrane. Its function is as follows. Key component of the proton channel; it plays a direct role in the translocation of protons across the membrane. This Marinobacter nauticus (strain ATCC 700491 / DSM 11845 / VT8) (Marinobacter aquaeolei) protein is ATP synthase subunit a.